We begin with the raw amino-acid sequence, 286 residues long: ATP synthase gamma chain (286 aa).

It belongs to the ATPase gamma chain family. As to quaternary structure, F-type ATPases have 2 components, CF(1) - the catalytic core - and CF(0) - the membrane proton channel. CF(1) has five subunits: alpha(3), beta(3), gamma(1), delta(1), epsilon(1). CF(0) has three main subunits: a, b and c.

It is found in the cell inner membrane. Functionally, produces ATP from ADP in the presence of a proton gradient across the membrane. The gamma chain is believed to be important in regulating ATPase activity and the flow of protons through the CF(0) complex. The polypeptide is ATP synthase gamma chain (Shewanella putrefaciens (strain CN-32 / ATCC BAA-453)).